Consider the following 581-residue polypeptide: Arginine--tRNA ligase (581 aa).

The short motif at 126-136 (PNLAKEMHVGH) is the 'HIGH' region element.

This sequence belongs to the class-I aminoacyl-tRNA synthetase family. Monomer.

The protein localises to the cytoplasm. The enzyme catalyses tRNA(Arg) + L-arginine + ATP = L-arginyl-tRNA(Arg) + AMP + diphosphate. This Shewanella baltica (strain OS155 / ATCC BAA-1091) protein is Arginine--tRNA ligase.